We begin with the raw amino-acid sequence, 375 residues long: Chaperone protein DnaJ (375 aa).

One can recognise a J domain in the interval 5-70 (DYYEVLGVNR…QKKGAYDRYG (66 aa)). The CR-type zinc finger occupies 134-212 (GAEKTIRIPT…CGGAGRVKKQ (79 aa)). Residues cysteine 147, cysteine 150, cysteine 164, cysteine 167, cysteine 186, cysteine 189, cysteine 200, and cysteine 203 each coordinate Zn(2+). CXXCXGXG motif repeat units lie at residues 147–154 (CGTCHGSG), 164–171 (CPTCGGAG), 186–193 (CPKCHGTG), and 200–207 (CGDCGGAG).

This sequence belongs to the DnaJ family. In terms of assembly, homodimer. Zn(2+) is required as a cofactor.

The protein localises to the cytoplasm. Functionally, participates actively in the response to hyperosmotic and heat shock by preventing the aggregation of stress-denatured proteins and by disaggregating proteins, also in an autonomous, DnaK-independent fashion. Unfolded proteins bind initially to DnaJ; upon interaction with the DnaJ-bound protein, DnaK hydrolyzes its bound ATP, resulting in the formation of a stable complex. GrpE releases ADP from DnaK; ATP binding to DnaK triggers the release of the substrate protein, thus completing the reaction cycle. Several rounds of ATP-dependent interactions between DnaJ, DnaK and GrpE are required for fully efficient folding. Also involved, together with DnaK and GrpE, in the DNA replication of plasmids through activation of initiation proteins. In Azoarcus sp. (strain BH72), this protein is Chaperone protein DnaJ.